The following is a 251-amino-acid chain: Low molecular mass lipoprotein PBMHPC-21 (251 aa).

Residues 1-16 (MKFVVVFASCVLAVSA) form the signal peptide.

The protein belongs to the 30 kDa lipoprotein family.

It localises to the secreted. The sequence is that of Low molecular mass lipoprotein PBMHPC-21 from Bombyx mori (Silk moth).